The chain runs to 153 residues: Actin-related protein 2/3 complex subunit 5-like protein (153 aa).

Phosphoserine is present on S64.

The protein belongs to the ARPC5 family. May be a component of the Arp2/3 complex in which it may replace ARPC5.

It is found in the cytoplasm. The protein resides in the cytoskeleton. Its function is as follows. May function as component of the Arp2/3 complex which is involved in regulation of actin polymerization and together with an activating nucleation-promoting factor (NPF) mediates the formation of branched actin networks. This is Actin-related protein 2/3 complex subunit 5-like protein (ARPC5L) from Pongo abelii (Sumatran orangutan).